The chain runs to 313 residues: S-methyl-5'-thioadenosine phosphorylase (313 aa).

Phosphate contacts are provided by residues Thr20, 68–69 (RH), and 101–102 (SA). Met203 contacts substrate. Ser204 contacts phosphate. Residue 227-229 (DYD) participates in substrate binding.

This sequence belongs to the PNP/MTAP phosphorylase family. MTAP subfamily. As to quaternary structure, homotrimer.

The protein resides in the cytoplasm. It is found in the nucleus. It carries out the reaction S-methyl-5'-thioadenosine + phosphate = 5-(methylsulfanyl)-alpha-D-ribose 1-phosphate + adenine. It participates in amino-acid biosynthesis; L-methionine biosynthesis via salvage pathway; S-methyl-5-thio-alpha-D-ribose 1-phosphate from S-methyl-5'-thioadenosine (phosphorylase route): step 1/1. Catalyzes the reversible phosphorylation of S-methyl-5'-thioadenosine (MTA) to adenine and 5-methylthioribose-1-phosphate. Involved in the breakdown of MTA, a major by-product of polyamine biosynthesis. Responsible for the first step in the methionine salvage pathway after MTA has been generated from S-adenosylmethionine. Has broad substrate specificity with 6-aminopurine nucleosides as preferred substrates. In Ajellomyces capsulatus (strain G186AR / H82 / ATCC MYA-2454 / RMSCC 2432) (Darling's disease fungus), this protein is S-methyl-5'-thioadenosine phosphorylase.